A 638-amino-acid polypeptide reads, in one-letter code: Threonine--tRNA ligase (638 aa).

In terms of domain architecture, TGS spans 1 to 61 (MPVITLPDGS…DADAQLQIIT (61 aa)). Residues 243-534 (DHRKIGKALN…LTEEFAGFFP (292 aa)) are catalytic. Zn(2+) is bound by residues cysteine 334, histidine 385, and histidine 511.

It belongs to the class-II aminoacyl-tRNA synthetase family. In terms of assembly, homodimer. It depends on Zn(2+) as a cofactor.

It is found in the cytoplasm. The enzyme catalyses tRNA(Thr) + L-threonine + ATP = L-threonyl-tRNA(Thr) + AMP + diphosphate + H(+). In terms of biological role, catalyzes the attachment of threonine to tRNA(Thr) in a two-step reaction: L-threonine is first activated by ATP to form Thr-AMP and then transferred to the acceptor end of tRNA(Thr). Also edits incorrectly charged L-seryl-tRNA(Thr). The polypeptide is Threonine--tRNA ligase (Alteromonas mediterranea (strain DSM 17117 / CIP 110805 / LMG 28347 / Deep ecotype)).